Reading from the N-terminus, the 29-residue chain is Cyclotide mela-2 (29 aa).

Residues 1-29 constitute a cross-link (cyclopeptide (Gly-Asp)); the sequence is GKPTCGETCFKGKCYTPGCTCSYPLCKKD. 3 disulfide bridges follow: Cys-5-Cys-19, Cys-9-Cys-21, and Cys-14-Cys-26.

This is a cyclic peptide. In terms of processing, contains 3 disulfide bonds.

Its function is as follows. Probably participates in a plant defense mechanism (Potential). Binds to and induces leakage in phospholipd membranes, particularly ones containing 1-palmitoyl-2-oleophosphatidylethanolamine (POPE). In vitro, displays cytotoxicity against cultured cells but no hemolytic activity towards fresh erythrocytes. Not active against Gram-negative bacterium E.coli ATCC 25922 or Gram-positive bacterium S.aureus ATCC 25923 up to a concentration of 64 uM. In Melicytus latifolius (Norfolk Island mahoe), this protein is Cyclotide mela-2.